We begin with the raw amino-acid sequence, 1097 residues long: DNA-directed RNA polymerase subunit beta (1097 aa).

Positions Asp-1073 to Asp-1097 are disordered. The span at Arg-1077–Thr-1091 shows a compositional bias: polar residues.

It belongs to the RNA polymerase beta chain family. As to quaternary structure, in cyanobacteria the RNAP catalytic core is composed of 2 alpha, 1 beta, 1 beta', 1 gamma and 1 omega subunit. When a sigma factor is associated with the core the holoenzyme is formed, which can initiate transcription.

The catalysed reaction is RNA(n) + a ribonucleoside 5'-triphosphate = RNA(n+1) + diphosphate. Functionally, DNA-dependent RNA polymerase catalyzes the transcription of DNA into RNA using the four ribonucleoside triphosphates as substrates. The protein is DNA-directed RNA polymerase subunit beta of Prochlorococcus marinus (strain MIT 9312).